We begin with the raw amino-acid sequence, 226 residues long: Thiamine-phosphate synthase (226 aa).

Residues Q46–K50 and N87 each bind 4-amino-2-methyl-5-(diphosphooxymethyl)pyrimidine. Residues D88 and D107 each coordinate Mg(2+). S126 contacts 4-amino-2-methyl-5-(diphosphooxymethyl)pyrimidine. T152–T154 serves as a coordination point for 2-[(2R,5Z)-2-carboxy-4-methylthiazol-5(2H)-ylidene]ethyl phosphate. K155 is a 4-amino-2-methyl-5-(diphosphooxymethyl)pyrimidine binding site. G183 lines the 2-[(2R,5Z)-2-carboxy-4-methylthiazol-5(2H)-ylidene]ethyl phosphate pocket.

The protein belongs to the thiamine-phosphate synthase family. Mg(2+) serves as cofactor.

It catalyses the reaction 2-[(2R,5Z)-2-carboxy-4-methylthiazol-5(2H)-ylidene]ethyl phosphate + 4-amino-2-methyl-5-(diphosphooxymethyl)pyrimidine + 2 H(+) = thiamine phosphate + CO2 + diphosphate. The enzyme catalyses 2-(2-carboxy-4-methylthiazol-5-yl)ethyl phosphate + 4-amino-2-methyl-5-(diphosphooxymethyl)pyrimidine + 2 H(+) = thiamine phosphate + CO2 + diphosphate. The catalysed reaction is 4-methyl-5-(2-phosphooxyethyl)-thiazole + 4-amino-2-methyl-5-(diphosphooxymethyl)pyrimidine + H(+) = thiamine phosphate + diphosphate. It participates in cofactor biosynthesis; thiamine diphosphate biosynthesis; thiamine phosphate from 4-amino-2-methyl-5-diphosphomethylpyrimidine and 4-methyl-5-(2-phosphoethyl)-thiazole: step 1/1. Its function is as follows. Condenses 4-methyl-5-(beta-hydroxyethyl)thiazole monophosphate (THZ-P) and 2-methyl-4-amino-5-hydroxymethyl pyrimidine pyrophosphate (HMP-PP) to form thiamine monophosphate (TMP). The protein is Thiamine-phosphate synthase of Mycobacterium sp. (strain JLS).